The primary structure comprises 424 residues: Histidine--tRNA ligase (424 aa).

This sequence belongs to the class-II aminoacyl-tRNA synthetase family. As to quaternary structure, homodimer.

It localises to the cytoplasm. The catalysed reaction is tRNA(His) + L-histidine + ATP = L-histidyl-tRNA(His) + AMP + diphosphate + H(+). The sequence is that of Histidine--tRNA ligase from Shewanella amazonensis (strain ATCC BAA-1098 / SB2B).